The following is a 271-amino-acid chain: Cytochrome b termination protein 1 (271 aa).

It is found in the mitochondrion. In terms of biological role, involved in 5'-end processing of mitochondrial COB, 15S rRNA, and RPM1 transcript. May also have a role in 3'-end processing of the COB pre-mRNA. This Saccharomyces cerevisiae (strain ATCC 204508 / S288c) (Baker's yeast) protein is Cytochrome b termination protein 1 (CBT1).